The following is a 597-amino-acid chain: DNA import protein CedB (597 aa).

The chain crosses the membrane as a helical span at residues 10–30; it reads VVLLILGIISFNLVFIILAII. 286–293 is a binding site for ATP; it reads GPTGSGKT.

It localises to the cell membrane. Its function is as follows. Part of the Ced system, which is involved in DNA import. The polypeptide is DNA import protein CedB (Sulfolobus acidocaldarius (strain ATCC 33909 / DSM 639 / JCM 8929 / NBRC 15157 / NCIMB 11770)).